Here is a 304-residue protein sequence, read N- to C-terminus: Secreted mono- and diacylglycerol lipase MDL2 (304 aa).

A signal peptide spans 1 to 19 (MILGRTISLFLGCSALVSG). A disulfide bond links Cys55 and Cys297. Residues Asn102 and Asn161 are each glycosylated (N-linked (GlcNAc...) asparagine). Catalysis depends on Ser171, which acts as the Nucleophile. Residue Asp228 is part of the active site. Asn253 carries an N-linked (GlcNAc...) asparagine glycan. His281 is a catalytic residue.

It belongs to the AB hydrolase superfamily. Lipase family. Class 3 subfamily.

The protein resides in the secreted. It is found in the cell wall. The catalysed reaction is a monoacylglycerol + H2O = glycerol + a fatty acid + H(+). The enzyme catalyses a diacylglycerol + H2O = a monoacylglycerol + a fatty acid + H(+). Functionally, secreted lipase involved in Dandruff and seborrheic dermatitis (D/SD) probably via lipase-mediated breakdown of sebaceous lipids and release of irritating free fatty acids. Shows activity against monoglyceride and diglyceride substrates, but not triglyceride substrates and does not exhibit regio-selective production of diacylglycerols. Hydrolyzes both 1,2- and 1,3-diacylglycerols. Also hydrolyzes distearin, dilinolein and dipalmitolein. Cleaves oleic acid from 1,2 isomers of diolein on both the 1 and the 2 position of the glycerol backbone, resulting mainly in free fatty acids but no monoolein is detected. Shows activity on monoolein and liberates mostly free fatty acids, but can also perform the reverse reaction and produce diolein. This chain is Secreted mono- and diacylglycerol lipase MDL2, found in Malassezia globosa (strain ATCC MYA-4612 / CBS 7966) (Dandruff-associated fungus).